We begin with the raw amino-acid sequence, 349 residues long: Nicotinate-nucleotide--dimethylbenzimidazole phosphoribosyltransferase (349 aa).

Glutamate 313 acts as the Proton acceptor in catalysis.

It belongs to the CobT family.

It catalyses the reaction 5,6-dimethylbenzimidazole + nicotinate beta-D-ribonucleotide = alpha-ribazole 5'-phosphate + nicotinate + H(+). It functions in the pathway nucleoside biosynthesis; alpha-ribazole biosynthesis; alpha-ribazole from 5,6-dimethylbenzimidazole: step 1/2. In terms of biological role, catalyzes the synthesis of alpha-ribazole-5'-phosphate from nicotinate mononucleotide (NAMN) and 5,6-dimethylbenzimidazole (DMB). The sequence is that of Nicotinate-nucleotide--dimethylbenzimidazole phosphoribosyltransferase from Mycobacterium avium (strain 104).